A 373-amino-acid polypeptide reads, in one-letter code: Chaperone protein DnaJ (373 aa).

Residues serine 4 to glycine 69 form the J domain. Residues glycine 135–lysine 212 form a CR-type zinc finger. Zn(2+) contacts are provided by cysteine 148, cysteine 151, cysteine 164, cysteine 167, cysteine 186, cysteine 189, cysteine 200, and cysteine 203. 4 CXXCXGXG motif repeats span residues cysteine 148–glycine 155, cysteine 164–glycine 171, cysteine 186–glycine 193, and cysteine 200–glycine 207.

It belongs to the DnaJ family. As to quaternary structure, homodimer. Zn(2+) serves as cofactor.

The protein localises to the cytoplasm. Functionally, participates actively in the response to hyperosmotic and heat shock by preventing the aggregation of stress-denatured proteins and by disaggregating proteins, also in an autonomous, DnaK-independent fashion. Unfolded proteins bind initially to DnaJ; upon interaction with the DnaJ-bound protein, DnaK hydrolyzes its bound ATP, resulting in the formation of a stable complex. GrpE releases ADP from DnaK; ATP binding to DnaK triggers the release of the substrate protein, thus completing the reaction cycle. Several rounds of ATP-dependent interactions between DnaJ, DnaK and GrpE are required for fully efficient folding. Also involved, together with DnaK and GrpE, in the DNA replication of plasmids through activation of initiation proteins. This chain is Chaperone protein DnaJ, found in Campylobacter jejuni subsp. jejuni serotype O:2 (strain ATCC 700819 / NCTC 11168).